The following is a 993-amino-acid chain: Glycine dehydrogenase (decarboxylating) (993 aa).

At Lys715 the chain carries N6-(pyridoxal phosphate)lysine.

This sequence belongs to the GcvP family. As to quaternary structure, the glycine cleavage system is composed of four proteins: P, T, L and H. It depends on pyridoxal 5'-phosphate as a cofactor.

The catalysed reaction is N(6)-[(R)-lipoyl]-L-lysyl-[glycine-cleavage complex H protein] + glycine + H(+) = N(6)-[(R)-S(8)-aminomethyldihydrolipoyl]-L-lysyl-[glycine-cleavage complex H protein] + CO2. In terms of biological role, the glycine cleavage system catalyzes the degradation of glycine. The P protein binds the alpha-amino group of glycine through its pyridoxal phosphate cofactor; CO(2) is released and the remaining methylamine moiety is then transferred to the lipoamide cofactor of the H protein. The chain is Glycine dehydrogenase (decarboxylating) from Xylella fastidiosa (strain Temecula1 / ATCC 700964).